The sequence spans 88 residues: Cell division topological specificity factor (88 aa).

This sequence belongs to the MinE family.

Functionally, prevents the cell division inhibition by proteins MinC and MinD at internal division sites while permitting inhibition at polar sites. This ensures cell division at the proper site by restricting the formation of a division septum at the midpoint of the long axis of the cell. The chain is Cell division topological specificity factor from Paracidovorax citrulli (strain AAC00-1) (Acidovorax citrulli).